Here is a 121-residue protein sequence, read N- to C-terminus: Large ribosomal subunit protein bL12 (121 aa).

Belongs to the bacterial ribosomal protein bL12 family. In terms of assembly, homodimer. Part of the ribosomal stalk of the 50S ribosomal subunit. Forms a multimeric L10(L12)X complex, where L10 forms an elongated spine to which 2 to 4 L12 dimers bind in a sequential fashion. Binds GTP-bound translation factors.

Forms part of the ribosomal stalk which helps the ribosome interact with GTP-bound translation factors. Is thus essential for accurate translation. This chain is Large ribosomal subunit protein bL12, found in Tolumonas auensis (strain DSM 9187 / NBRC 110442 / TA 4).